The following is a 348-amino-acid chain: Inositol 2-dehydrogenase/D-chiro-inositol 3-dehydrogenase (348 aa).

The protein belongs to the Gfo/Idh/MocA family. As to quaternary structure, homotetramer.

The catalysed reaction is myo-inositol + NAD(+) = scyllo-inosose + NADH + H(+). It carries out the reaction 1D-chiro-inositol + NAD(+) = scyllo-inosine + NADH + H(+). Its pathway is polyol metabolism; myo-inositol degradation into acetyl-CoA; acetyl-CoA from myo-inositol: step 1/7. Involved in the oxidation of myo-inositol (MI) and D-chiro-inositol (DCI) to 2-keto-myo-inositol (2KMI or 2-inosose) and 1-keto-D-chiro-inositol (1KDCI), respectively. This is Inositol 2-dehydrogenase/D-chiro-inositol 3-dehydrogenase from Halalkalibacterium halodurans (strain ATCC BAA-125 / DSM 18197 / FERM 7344 / JCM 9153 / C-125) (Bacillus halodurans).